Here is a 259-residue protein sequence, read N- to C-terminus: Phosphate import ATP-binding protein PstB (259 aa).

Residues 2-248 enclose the ABC transporter domain; that stretch reads GQRIDVNHEN…ITMFNNPQNE (247 aa). An ATP-binding site is contributed by 37–44; sequence GPSGCGKS.

It belongs to the ABC transporter superfamily. Phosphate importer (TC 3.A.1.7) family. As to quaternary structure, the complex is composed of two ATP-binding proteins (PstB), two transmembrane proteins (PstC and PstA) and a solute-binding protein (PstS).

The protein localises to the cell membrane. It carries out the reaction phosphate(out) + ATP + H2O = ADP + 2 phosphate(in) + H(+). Part of the ABC transporter complex PstSACB involved in phosphate import. Responsible for energy coupling to the transport system. This chain is Phosphate import ATP-binding protein PstB, found in Bifidobacterium longum (strain NCC 2705).